The following is a 97-amino-acid chain: Co-chaperonin GroES (97 aa).

This sequence belongs to the GroES chaperonin family. Heptamer of 7 subunits arranged in a ring. Interacts with the chaperonin GroEL.

Its subcellular location is the cytoplasm. Its function is as follows. Together with the chaperonin GroEL, plays an essential role in assisting protein folding. The GroEL-GroES system forms a nano-cage that allows encapsulation of the non-native substrate proteins and provides a physical environment optimized to promote and accelerate protein folding. GroES binds to the apical surface of the GroEL ring, thereby capping the opening of the GroEL channel. In Stutzerimonas stutzeri (Pseudomonas stutzeri), this protein is Co-chaperonin GroES.